The chain runs to 741 residues: Fibrinogen alpha chain (741 aa).

The N-terminal stretch at 1–18 (MIPVTILCVLLCLNLAWA) is a signal peptide. Q19 carries the pyrrolidone carboxylic acid modification. A coiled-coil region spans residues 67 to 506 (CCRMQGIIDD…STRRSYNGKD (440 aa)). The interval 270–307 (VAEARGDSSPSHTGKLITSSHRRESPSLVDKTSSASSV) is disordered. The segment covering 277–288 (SSPSHTGKLITS) has biased composition (polar residues). Residues C310 and C341 are joined by a disulfide bond. Low complexity-rich tracts occupy residues 381 to 398 (STSS…HVTG) and 435 to 449 (SASH…SSSS). The tract at residues 381-510 (STSSRHSIGS…SYNGKDCDDI (130 aa)) is disordered. The span at 450 to 459 (FNKGGSTFET) shows a compositional bias: polar residues. The Fibrinogen C-terminal domain occupies 498–739 (TRRSYNGKDC…VVRMKIRPLE (242 aa)). Ca(2+) is bound by residues D666, D668, W670, and E672. C674 and C687 are joined by a disulfide.

As to quaternary structure, heterohexamer; disulfide linked. Contains 2 sets of 3 non-identical chains (alpha, beta and gamma). The 2 heterotrimers are in head to head conformation with the N-termini in a small central domain. Conversion of fibrinogen to fibrin is triggered by thrombin, which cleaves fibrinopeptides A and B from alpha and beta chains, and thus exposes the N-terminal polymerization sites responsible for the formation of the soft clot. The soft clot is converted into the hard clot by factor XIIIA which catalyzes the epsilon-(gamma-glutamyl)lysine cross-linking between gamma chains (stronger) and between alpha chains (weaker) of different monomers. Post-translationally, forms F13A-mediated cross-links between a glutamine and the epsilon-amino group of a lysine residue, forming fibronectin-fibrinogen heteropolymers.

The protein resides in the secreted. Functionally, cleaved by the protease thrombin to yield monomers which, together with fibrinogen beta (FGB) and fibrinogen gamma (FGG), polymerize to form an insoluble fibrin matrix. Fibrin has a major function in hemostasis as one of the primary components of blood clots. The chain is Fibrinogen alpha chain (FGA) from Gallus gallus (Chicken).